Reading from the N-terminus, the 1547-residue chain is DNA topoisomerase 2 (1547 aa).

Residues 8–30 (FNKMSSPKQNGTGEPAPAKGQKG) form a disordered region. Positions 9–19 (NKMSSPKQNGT) are enriched in polar residues. ATP-binding positions include asparagine 99, asparagine 128, 156–158 (SSN), and 169–176 (GRNGYGAK). The tract at residues 351 to 353 (KKK) is interaction with DNA. An ATP-binding site is contributed by 385–387 (QTK). One can recognise a Toprim domain in the interval 463 to 580 (CTLILTEGDS…ELLKLPFLEE (118 aa)). Glutamate 469, aspartate 549, and aspartate 551 together coordinate Mg(2+). The region spanning 723–1192 (IPSMIDGLKP…TAPMLWREDL (470 aa)) is the Topo IIA-type catalytic domain. Tyrosine 813 acts as the O-(5'-phospho-DNA)-tyrosine intermediate in catalysis. Residues 996-1005 (KLQTTISMTC) form an interaction with DNA region. 4 disordered regions span residues 1107-1134 (TALEDDDAQESEEEEPEPDPKGKPVDPD), 1209-1249 (EELN…ISDD), 1261-1423 (KTRK…MDSD), and 1459-1547 (RQRR…SLSD). The segment covering 1109 to 1123 (LEDDDAQESEEEEPE) has biased composition (acidic residues). Residues 1124-1134 (PDPKGKPVDPD) are compositionally biased toward basic and acidic residues. The span at 1216 to 1228 (KTSKAMAGKKNRK) shows a compositional bias: basic residues. Basic and acidic residues-rich tracts occupy residues 1238–1249 (NGRRVEPKISDD) and 1294–1315 (EKPEKAEKPDKVDKAEKTDGLK). Residues 1331–1344 (TFSGSSSGEMSASD) are compositionally biased toward low complexity. Residues 1373 to 1383 (DDSGSDSEPEL) are compositionally biased toward acidic residues. Basic and acidic residues-rich tracts occupy residues 1384–1394 (LDNKIDSDHEA) and 1459–1488 (RQRRCDTSVPPKEKAAPKRKLMNVDKDEKK). Positions 1513–1528 (KGKKKTAANPKKKAKK) are enriched in basic residues. The span at 1537 to 1547 (DFNISDSSLSD) shows a compositional bias: polar residues.

This sequence belongs to the type II topoisomerase family. As to quaternary structure, homodimer. Requires Mg(2+) as cofactor. It depends on Mn(2+) as a cofactor. Ca(2+) is required as a cofactor.

It localises to the nucleus. It carries out the reaction ATP-dependent breakage, passage and rejoining of double-stranded DNA.. Control of topological states of DNA by transient breakage and subsequent rejoining of DNA strands. Topoisomerase II makes double-strand breaks. This is DNA topoisomerase 2 (TOP2) from Bombyx mori (Silk moth).